Consider the following 472-residue polypeptide: Keratin, type I cytoskeletal 14 (472 aa).

Positions 1–114 (MTTCSRQFTS…AGGDGLLVGS (114 aa)) are head. Residues 115–150 (EKVTMQNLNDRLASYLDKVRALEEANADLEVKIRDW) are coil 1A. An IF rod domain is found at 115 to 426 (EKVTMQNLND…RLLEGEDAHL (312 aa)). A linker 1 region spans residues 151–168 (YQRQRPAEIKDYSPYFKT). Positions 169 to 260 (IEDLRNKILT…KNHEEEMNAL (92 aa)) are coil 1B. Positions 261–283 (RGQVGGDVNVEMDAAPGVDLSRI) are linker 12. A coil 2 region spans residues 284–422 (LNEMRDQYEK…ATYRRLLEGE (139 aa)). Residues 423–472 (DAHLSSSQFSSGSQSSRDVTSSSRQIRTKVMDVHDGKVVSTHEQVLRTKN) are tail. The interaction with Type I keratins and keratin filaments stretch occupies residues 425-472 (HLSSSQFSSGSQSSRDVTSSSRQIRTKVMDVHDGKVVSTHEQVLRTKN). The segment at 426-472 (LSSSQFSSGSQSSRDVTSSSRQIRTKVMDVHDGKVVSTHEQVLRTKN) is disordered. Over residues 427–445 (SSSQFSSGSQSSRDVTSSS) the composition is skewed to low complexity. Ser-435 carries the phosphoserine modification.

Belongs to the intermediate filament family. Heterotetramer of two type I and two type II keratins. Forms a disulfide-linked heterodimer (via 2B domains) with KRT5 (via 2B domains). Forms a heterodimer with KRT1; the interaction is more abundant in the absence of KRT5. Interacts with PLEC isoform 1C, when in a heterodimer with KRT5. Interacts with TRADD and with keratin filaments. Associates with other type I keratins. Interacts with EPPK1. Interacts with KLHL24. Interacts with PKP1 (via N-terminus) and PKP2. Post-translationally, a disulfide bond is formed between rather than within filaments and promotes the formation of a keratin filament cage around the nucleus. Ubiquitinated by the BCR(KLHL24) E3 ubiquitin ligase complex. In terms of tissue distribution, expressed in the corneal epithelium (at protein level). Detected in the basal layer, lowered within the more apically located layers specifically in the stratum spinosum, stratum granulosum but is not detected in stratum corneum. Strongly expressed in the outer root sheath of anagen follicles but not in the germinative matrix, inner root sheath or hair. Found in keratinocytes surrounding the club hair during telogen.

Its subcellular location is the cytoplasm. The protein resides in the nucleus. Its function is as follows. The nonhelical tail domain is involved in promoting KRT5-KRT14 filaments to self-organize into large bundles and enhances the mechanical properties involved in resilience of keratin intermediate filaments in vitro. In Homo sapiens (Human), this protein is Keratin, type I cytoskeletal 14 (KRT14).